A 74-amino-acid chain; its full sequence is Sec-independent protein translocase protein TatA (74 aa).

Residues 1–21 (MGSIGMTELLLIFGIIVLLFG) form a helical membrane-spanning segment.

The protein belongs to the TatA/E family. As to quaternary structure, forms a complex with TatC.

Its subcellular location is the cell inner membrane. Functionally, part of the twin-arginine translocation (Tat) system that transports large folded proteins containing a characteristic twin-arginine motif in their signal peptide across membranes. TatA could form the protein-conducting channel of the Tat system. The sequence is that of Sec-independent protein translocase protein TatA from Sulfurihydrogenibium sp. (strain YO3AOP1).